The chain runs to 257 residues: Imidazole glycerol phosphate synthase subunit HisF (257 aa).

Catalysis depends on residues Asp11 and Asp130.

It belongs to the HisA/HisF family. In terms of assembly, heterodimer of HisH and HisF.

It localises to the cytoplasm. It carries out the reaction 5-[(5-phospho-1-deoxy-D-ribulos-1-ylimino)methylamino]-1-(5-phospho-beta-D-ribosyl)imidazole-4-carboxamide + L-glutamine = D-erythro-1-(imidazol-4-yl)glycerol 3-phosphate + 5-amino-1-(5-phospho-beta-D-ribosyl)imidazole-4-carboxamide + L-glutamate + H(+). Its pathway is amino-acid biosynthesis; L-histidine biosynthesis; L-histidine from 5-phospho-alpha-D-ribose 1-diphosphate: step 5/9. IGPS catalyzes the conversion of PRFAR and glutamine to IGP, AICAR and glutamate. The HisF subunit catalyzes the cyclization activity that produces IGP and AICAR from PRFAR using the ammonia provided by the HisH subunit. This chain is Imidazole glycerol phosphate synthase subunit HisF, found in Photobacterium profundum (strain SS9).